The following is a 1123-amino-acid chain: uncharacterized protein (1123 aa).

Disordered regions lie at residues 136–229 (LGES…PKLT), 262–471 (MLQY…LNQH), 483–514 (LSSIPINNKENNNNNNNRDNRDKDICTTSPNL), 527–609 (KKIN…QSDD), 629–769 (SILC…NNIS), 782–812 (LKPKPLHLSSPSIPTTSPDAPYRLPSLNSSS), 835–1005 (ITNN…GESN), and 1070–1099 (NNNNNNNNNNNNNNNNNNNNNNNNNNNNNI). Gly residues predominate over residues 166–185 (GGNGGNSGTNGDGDDGGCSL). Residues 190–199 (DENDYEDGMV) show a composition bias toward acidic residues. Positions 211-223 (SGDGGGGGGGGGD) are enriched in gly residues. A compositionally biased stretch (low complexity) spans 262-322 (MLQYQQQQQQ…TTTTHSNNSN (61 aa)). A compositionally biased stretch (polar residues) spans 329–343 (PLNNSNSNIHFLTNQ). Composition is skewed to low complexity over residues 344-387 (QNSD…SNLN), 397-464 (STST…SSSS), 489-499 (NNKENNNNNNN), 527-548 (KKINSNNNNNNNNSNNNNNISS), and 563-585 (HQQQQQQQQQQQQQQQQHQQQHQ). Residues 590–604 (SKSSSELQVPSSNYH) show a composition bias toward polar residues. Over residues 632-646 (CKDDSKTNTNKDKDN) the composition is skewed to basic and acidic residues. Low complexity-rich tracts occupy residues 647–707 (NNSN…INNN) and 727–769 (SVSS…NNIS). Over residues 790 to 799 (SSPSIPTTSP) the composition is skewed to polar residues. 2 stretches are compositionally biased toward low complexity: residues 835-984 (ITNN…NNNI) and 1070-1098 (NNNNNNNNNNNNNNNNNNNNNNNNNNNNN).

This is an uncharacterized protein from Dictyostelium discoideum (Social amoeba).